The following is a 183-amino-acid chain: ATP synthase subunit b, chloroplastic (183 aa).

The helical transmembrane segment at 25–45 threads the bilayer; it reads DILATNLINLTVVVGVLIFFG.

Belongs to the ATPase B chain family. F-type ATPases have 2 components, F(1) - the catalytic core - and F(0) - the membrane proton channel. F(1) has five subunits: alpha(3), beta(3), gamma(1), delta(1), epsilon(1). F(0) has four main subunits: a(1), b(1), b'(1) and c(10-14). The alpha and beta chains form an alternating ring which encloses part of the gamma chain. F(1) is attached to F(0) by a central stalk formed by the gamma and epsilon chains, while a peripheral stalk is formed by the delta, b and b' chains.

The protein localises to the plastid. It is found in the chloroplast thylakoid membrane. Its function is as follows. F(1)F(0) ATP synthase produces ATP from ADP in the presence of a proton or sodium gradient. F-type ATPases consist of two structural domains, F(1) containing the extramembraneous catalytic core and F(0) containing the membrane proton channel, linked together by a central stalk and a peripheral stalk. During catalysis, ATP synthesis in the catalytic domain of F(1) is coupled via a rotary mechanism of the central stalk subunits to proton translocation. Functionally, component of the F(0) channel, it forms part of the peripheral stalk, linking F(1) to F(0). In Saccharum hybrid (Sugarcane), this protein is ATP synthase subunit b, chloroplastic.